A 181-amino-acid polypeptide reads, in one-letter code: 3-isopropylmalate dehydratase small subunit (181 aa).

This sequence belongs to the LeuD family. LeuD type 2 subfamily. In terms of assembly, heterodimer of LeuC and LeuD.

It carries out the reaction (2R,3S)-3-isopropylmalate = (2S)-2-isopropylmalate. It participates in amino-acid biosynthesis; L-leucine biosynthesis; L-leucine from 3-methyl-2-oxobutanoate: step 2/4. Catalyzes the isomerization between 2-isopropylmalate and 3-isopropylmalate, via the formation of 2-isopropylmaleate. The sequence is that of 3-isopropylmalate dehydratase small subunit from Deinococcus deserti (strain DSM 17065 / CIP 109153 / LMG 22923 / VCD115).